We begin with the raw amino-acid sequence, 306 residues long: MTYKMKKEYAFWATVCLLLSLVPEFLNALSEEADDTDSELGSMKPLHTFCAMKADDGPCKAMIRSYFFNMYTHQCEEFIYGGCEGNENRFDTLEECKKTCIPGYEKTAVKAASGAERPDFCFLEEDPGLCRGYMKRYLYNNQTKQCERFVYGGCLGNRNNFETLDECKKICENPVHSPSPVNEVQMSDYVTDGNTVTDRSTVNNIVVPQSPKVPRRRDYRGRPWCLQPADSGLCKASERRFYYNSATGKCHRFNYTGCGGNNNNFTTRRRCLRSCKTGLIKNKSKGVVKIQRRKAPFVKVVYESIN.

The signal sequence occupies residues Met-1–Ala-28. 3 consecutive BPTI/Kunitz inhibitor domains span residues Cys-50–Cys-100, Cys-121–Cys-171, and Cys-225–Cys-275. Cystine bridges form between Cys-50/Cys-100, Cys-59/Cys-83, Cys-75/Cys-96, Cys-121/Cys-171, Cys-130/Cys-154, Cys-146/Cys-167, Cys-225/Cys-275, Cys-234/Cys-258, and Cys-250/Cys-271. Asn-141 carries N-linked (GlcNAc...) asparagine glycosylation. Residues Asn-254, Asn-264, and Asn-282 are each glycosylated (N-linked (GlcNAc...) asparagine).

In terms of tissue distribution, isoform alpha is expressed in heart and spleen; isoform beta in heart and lung.

The protein resides in the secreted. Inhibits factor X (X(a)) directly and, in a Xa-dependent way, inhibits VIIa/tissue factor activity, presumably by forming a quaternary Xa/LACI/VIIa/TF complex. It possesses an antithrombotic action and also the ability to associate with lipoproteins in plasma. This is Tissue factor pathway inhibitor (Tfpi) from Mus musculus (Mouse).